The chain runs to 397 residues: Probable peptidoglycan glycosyltransferase FtsW (397 aa).

Residues 1-26 lie on the Cytoplasmic side of the membrane; sequence MSPRNSALERFRQHQKIPEKRWQRLA. Residues 27 to 47 form a helical membrane-spanning segment; that stretch reads FPDVGLLLCWLALIVIGMVMV. Over 48 to 69 the chain is Periplasmic; sequence TSSSLSEAHVERLSTHHFAIRQ. A helical membrane pass occupies residues 70–90; that stretch reads GIFYVGSSIFAYIAFMLGTNF. Residues 91–96 lie on the Cytoplasmic side of the membrane; it reads YREKAK. Residues 97–117 form a helical membrane-spanning segment; the sequence is FILGLAFLGLLLVYAPGIGVV. Topologically, residues 118-126 are periplasmic; sequence VNGSRRWLN. A helical transmembrane segment spans residues 127–147; it reads LGVINLQVGEFAKLAVFIFTA. The Cytoplasmic portion of the chain corresponds to 148-159; sequence AYLQHHTQRLDH. The helical transmembrane segment at 160 to 180 threads the bilayer; sequence SWQPIIGLLAVTACFALMFYL. Over 181 to 185 the chain is Periplasmic; the sequence is QPDFG. The chain crosses the membrane as a helical span at residues 186 to 206; it reads TMVVIVATVLGMLFLSGVSIW. A topological domain (cytoplasmic) is located at residue Arg-207. A helical membrane pass occupies residues 208–228; it reads LLLLGVLIAPAMVWVLISESY. Over 229-294 the chain is Periplasmic; it reads RLRRLTTFIN…IFSIIAEETG (66 aa). A helical transmembrane segment spans residues 295–315; the sequence is LVGALIVMAILMILVWRAFAI. At 316-328 the chain is on the cytoplasmic side; the sequence is GYLADRMRKRFSS. Residues 329–349 traverse the membrane as a helical segment; sequence LLAYGIGLWLGLQSLINIGVT. Topologically, residues 350–359 are periplasmic; it reads TGALPTKGLT. Residues 360–380 form a helical membrane-spanning segment; that stretch reads LPLISYGGSSILMTSIALAIL. At 381–397 the chain is on the cytoplasmic side; the sequence is ARIDAESRFIARLEGKI.

This sequence belongs to the SEDS family. FtsW subfamily.

The protein localises to the cell inner membrane. It carries out the reaction [GlcNAc-(1-&gt;4)-Mur2Ac(oyl-L-Ala-gamma-D-Glu-L-Lys-D-Ala-D-Ala)](n)-di-trans,octa-cis-undecaprenyl diphosphate + beta-D-GlcNAc-(1-&gt;4)-Mur2Ac(oyl-L-Ala-gamma-D-Glu-L-Lys-D-Ala-D-Ala)-di-trans,octa-cis-undecaprenyl diphosphate = [GlcNAc-(1-&gt;4)-Mur2Ac(oyl-L-Ala-gamma-D-Glu-L-Lys-D-Ala-D-Ala)](n+1)-di-trans,octa-cis-undecaprenyl diphosphate + di-trans,octa-cis-undecaprenyl diphosphate + H(+). It functions in the pathway cell wall biogenesis; peptidoglycan biosynthesis. In terms of biological role, peptidoglycan polymerase that is essential for cell division. The sequence is that of Probable peptidoglycan glycosyltransferase FtsW from Dichelobacter nodosus (strain VCS1703A).